A 330-amino-acid polypeptide reads, in one-letter code: 5'-AMP-activated protein kinase subunit gamma-1 (330 aa).

The span at 1–13 (METVTSSDSSSAV) shows a compositional bias: polar residues. Residues 1–26 (METVTSSDSSSAVENEHPQDTPESNN) are disordered. CBS domains lie at 43 to 103 (PTSS…KSAL), 125 to 187 (SFKP…PKPE), and 198 to 260 (IGTY…NLDV). ADP contacts are provided by residues Arg-70, 85 to 90 (MLTITD), Val-130, 151 to 152 (HR), and Lys-170. Residues Arg-70, 85-90 (MLTITD), Val-130, His-151, 151-152 (HR), Lys-170, Thr-200, Ala-205, 226-227 (SA), and 242-245 (SKFD) contribute to the AMP site. ATP is bound by residues Arg-70, 85-90 (MLTITD), Val-130, 151-152 (HR), Arg-152, and Lys-170. An AMPK pseudosubstrate motif is present at residues 138-159 (LFDAVSSLIRNKIHRLPVIDPE). 242–245 (SKFD) lines the ADP pocket. 242 to 245 (SKFD) contributes to the ATP binding site. Ser-261 is subject to Phosphoserine; by ULK1. Position 263 is a phosphothreonine; by ULK1 (Thr-263). Residue Arg-269 coordinates ADP. Arg-269 is a binding site for AMP. Position 269 (Arg-269) interacts with ATP. Ser-270 carries the phosphoserine; by ULK1 modification. Residues 272 to 329 (YFEGVLKCYLHETLETIINRLVEAEVHRLVVVDENDVVKGIVSLSDILQALVLTGGEK) form the CBS 4 domain. ADP contacts are provided by residues Leu-277 and 298-299 (HR). AMP is bound by residues Leu-277, His-298, 298 to 299 (HR), and 314 to 317 (SLSD). ATP contacts are provided by residues Leu-277 and 298-299 (HR).

Belongs to the 5'-AMP-activated protein kinase gamma subunit family. AMPK is a heterotrimer of an alpha catalytic subunit (PRKAA1 or PRKAA2), a beta (PRKAB1 or PRKAB2) and a gamma non-catalytic subunits (PRKAG1, PRKAG2 or PRKAG3). Interacts with FNIP1 and FNIP2. Post-translationally, phosphorylated by ULK1 and ULK2; leading to negatively regulate AMPK activity and suggesting the existence of a regulatory feedback loop between ULK1, ULK2 and AMPK. In terms of processing, glycosylated; O-GlcNAcylated by OGT, promoting the AMP-activated protein kinase (AMPK) activity.

Its function is as follows. AMP/ATP-binding subunit of AMP-activated protein kinase (AMPK), an energy sensor protein kinase that plays a key role in regulating cellular energy metabolism. In response to reduction of intracellular ATP levels, AMPK activates energy-producing pathways and inhibits energy-consuming processes: inhibits protein, carbohydrate and lipid biosynthesis, as well as cell growth and proliferation. AMPK acts via direct phosphorylation of metabolic enzymes, and by longer-term effects via phosphorylation of transcription regulators. Also acts as a regulator of cellular polarity by remodeling the actin cytoskeleton; probably by indirectly activating myosin. Gamma non-catalytic subunit mediates binding to AMP, ADP and ATP, leading to activate or inhibit AMPK: AMP-binding results in allosteric activation of alpha catalytic subunit (PRKAA1 or PRKAA2) both by inducing phosphorylation and preventing dephosphorylation of catalytic subunits. ADP also stimulates phosphorylation, without stimulating already phosphorylated catalytic subunit. ATP promotes dephosphorylation of catalytic subunit, rendering the AMPK enzyme inactive. The protein is 5'-AMP-activated protein kinase subunit gamma-1 (PRKAG1) of Sus scrofa (Pig).